The sequence spans 153 residues: Transthyretin (153 aa).

An N-terminal signal peptide occupies residues 1 to 19 (MASFKSFLLLALLAIVSEA). Cys34 carries the post-translational modification Sulfocysteine. L-thyroxine-binding residues include Lys39 and Glu78. N-linked (GlcNAc...) asparagine glycosylation occurs at Asn81. Residue Ser141 participates in L-thyroxine binding.

Belongs to the transthyretin family. In terms of assembly, homotetramer. Dimer of dimers. In the homotetramer, subunits assemble around a central channel that can accommodate two ligand molecules. Interacts with rbp4. Sulfonation of the reactive cysteine Cys-34 enhances the stability of the native conformation of TTR, avoiding misassembly of the protein leading to amyloid formation. Detected in plasma (at protein level). Expressed during metamorphosis in tadpole liver, but not in tadpole brain nor adult liver. Between 1.5 and 3 days of development, also expressed in the mesoderm of the kidney.

It is found in the secreted. Functionally, thyroid hormone-binding protein, with a much higher binding affinity for triiodothyronine (T3) than for thyroxine (T4). Probably transports triiodothyronine from the bloodstream to the brain. In Xenopus laevis (African clawed frog), this protein is Transthyretin (ttr).